The sequence spans 166 residues: Cyclic pyranopterin monophosphate synthase (166 aa).

Substrate-binding positions include Leu-75–His-77 and Met-113–Glu-114. The active site involves Asp-128.

This sequence belongs to the MoaC family. As to quaternary structure, homohexamer; trimer of dimers.

The enzyme catalyses (8S)-3',8-cyclo-7,8-dihydroguanosine 5'-triphosphate = cyclic pyranopterin phosphate + diphosphate. The protein operates within cofactor biosynthesis; molybdopterin biosynthesis. Its function is as follows. Catalyzes the conversion of (8S)-3',8-cyclo-7,8-dihydroguanosine 5'-triphosphate to cyclic pyranopterin monophosphate (cPMP). This chain is Cyclic pyranopterin monophosphate synthase, found in Thermomicrobium roseum (strain ATCC 27502 / DSM 5159 / P-2).